Here is a 609-residue protein sequence, read N- to C-terminus: Sterol O-acyltransferase 2 (609 aa).

The span at 1 to 15 (MGRTNTSDQLNAISD) shows a compositional bias: polar residues. Residues 1–41 (MGRTNTSDQLNAISDKNTKRKSLALDNEYHNNSSSEDDSSK) are disordered. 6 helical membrane-spanning segments follow: residues 152–172 (FFGM…NNLI), 195–215 (LFKV…AFFV), 229–249 (VGWW…LWIA), 253–273 (CLDF…VFIM), 402–422 (WSYV…MILI), and 451–471 (FLLM…FFLI). The FYXDWWN motif signature appears at 490 to 496 (FYGPWWS). 2 helical membrane-spanning segments follow: residues 534–554 (AAII…YVIF) and 589–609 (IICW…YLVF). His546 is an active-site residue.

It belongs to the membrane-bound acyltransferase family. Sterol o-acyltransferase subfamily.

The protein resides in the endoplasmic reticulum membrane. Inhibited by the protoberberine derivative HWY-289 in a non-competitive manner. Inhibited by miconazole. Not inhibited by CI-976, polyoxin D, amphotericin B or nikkomycin Z. Functionally, sterol O-acyltransferase that catalyzes the formation of stery esters. The chain is Sterol O-acyltransferase 2 from Candida albicans (Yeast).